Consider the following 1373-residue polypeptide: Disease resistance protein RRS1 (1373 aa).

The region spanning 5 to 146 (EKDEEFVCIS…EIVRDVYETH (142 aa)) is the TIR domain. The 252-residue stretch at 170–421 (IGIRCVGIWG…LLEGCGFFPH (252 aa)) folds into the NB-ARC domain. Position 179–186 (179–186 (GMPGIGKT)) interacts with ATP. LRR repeat units lie at residues 498 to 522 (SEEI…AFKN), 535 to 553 (NPEV…HSLP), 554 to 575 (NELR…NFDP), 577 to 598 (HLVE…TKNL), 621 to 646 (AENL…RLLR), 665 to 688 (PPNI…TVKP), 742 to 766 (LPNM…SIQG), 768 to 793 (PRFL…SLEI), and 831 to 854 (PRNL…PLSL). The short motif at 988 to 1005 (RNFHCWAPGKVVPKVRKD) is the Nuclear localization signal element. A DNA-binding region (WRKY) is located at residues 1204 to 1272 (IPAIDEGDLW…YLSEHNHPRP (69 aa)). The interval 1300 to 1323 (RVFQNKDEPNKPHLPSSSTPPGNA) is disordered.

As to quaternary structure, interacts with PopP2, a R.solanacearum type III effector.

It localises to the nucleus. Functionally, transcription factor. Interacts specifically with the W box (5'-(T)TGAC[CT]-3'), a frequently occurring elicitor-responsive cis-acting element. Also acts as a disease resistance protein involved in resistance to fungal and bacterial pathogens, including R.solanacearum, P.syringae pv. tomato and C.higginsianum. This is Disease resistance protein RRS1 from Arabidopsis thaliana (Mouse-ear cress).